The primary structure comprises 60 residues: Large ribosomal subunit protein uL30 (60 aa).

It belongs to the universal ribosomal protein uL30 family. Part of the 50S ribosomal subunit.

The protein is Large ribosomal subunit protein uL30 of Streptococcus gordonii (strain Challis / ATCC 35105 / BCRC 15272 / CH1 / DL1 / V288).